Here is a 229-residue protein sequence, read N- to C-terminus: Heptahelical transmembrane protein ADIPOR2 (229 aa).

Over 1–4 (MQGA) the chain is Cytoplasmic. A helical transmembrane segment spans residues 5-25 (ASHDAAAAAAAAAVLGGGHGV). Residues 26 to 30 (PRWPR) lie on the Extracellular side of the membrane. The helical transmembrane segment at 31–51 (MVFLVGAMTCLAISATAHLLA) threads the bilayer. Residues 52 to 66 (CHSRRASVVFWQLDY) lie on the Cytoplasmic side of the membrane. The helical transmembrane segment at 67-87 (AGISAMIVASFVPPVYYAFLC) threads the bilayer. Over 88 to 92 (HRPAR) the chain is Extracellular. The chain crosses the membrane as a helical span at residues 93-113 (VAYLSAISALGALVVGALLSP). The Cytoplasmic segment spans residues 114–124 (PCSSPRFRRLR). The helical transmembrane segment at 125–145 (AALFLAMGLSGVVPALHALWL) threads the bilayer. The Extracellular portion of the chain corresponds to 146-153 (NWGHAACY). Residues 154 to 174 (LALSLEVAMGLAYAAGAWFYV) traverse the membrane as a helical segment. The Cytoplasmic portion of the chain corresponds to 175–194 (SRVPEKWRPGVFDVVGHSHQ). Residues 195–215 (IFHVLVLVGAVTHYVAVDVLL) form a helical membrane-spanning segment. Residues 216 to 229 (NWRETVAAACSATS) lie on the Extracellular side of the membrane.

This sequence belongs to the ADIPOR family.

It is found in the membrane. May play a role in abiotic stress response. This chain is Heptahelical transmembrane protein ADIPOR2 (ADIPOR2), found in Oryza sativa subsp. japonica (Rice).